The primary structure comprises 155 residues: Lipoprotein signal peptidase (155 aa).

Transmembrane regions (helical) follow at residues W7–V27, I39–F59, V63–F83, and G96–V116. Catalysis depends on residues D117 and D133. The helical transmembrane segment at F126 to S146 threads the bilayer.

This sequence belongs to the peptidase A8 family.

It is found in the cell inner membrane. It carries out the reaction Release of signal peptides from bacterial membrane prolipoproteins. Hydrolyzes -Xaa-Yaa-Zaa-|-(S,diacylglyceryl)Cys-, in which Xaa is hydrophobic (preferably Leu), and Yaa (Ala or Ser) and Zaa (Gly or Ala) have small, neutral side chains.. It participates in protein modification; lipoprotein biosynthesis (signal peptide cleavage). Its function is as follows. This protein specifically catalyzes the removal of signal peptides from prolipoproteins. The sequence is that of Lipoprotein signal peptidase from Microcystis aeruginosa (strain NIES-843 / IAM M-2473).